Reading from the N-terminus, the 378-residue chain is Anhydro-N-acetylmuramic acid kinase (378 aa).

Residue Gly-23–Asp-30 coordinates ATP.

It belongs to the anhydro-N-acetylmuramic acid kinase family.

The catalysed reaction is 1,6-anhydro-N-acetyl-beta-muramate + ATP + H2O = N-acetyl-D-muramate 6-phosphate + ADP + H(+). The protein operates within amino-sugar metabolism; 1,6-anhydro-N-acetylmuramate degradation. It functions in the pathway cell wall biogenesis; peptidoglycan recycling. Catalyzes the specific phosphorylation of 1,6-anhydro-N-acetylmuramic acid (anhMurNAc) with the simultaneous cleavage of the 1,6-anhydro ring, generating MurNAc-6-P. Is required for the utilization of anhMurNAc either imported from the medium or derived from its own cell wall murein, and thus plays a role in cell wall recycling. The protein is Anhydro-N-acetylmuramic acid kinase of Bordetella pertussis (strain Tohama I / ATCC BAA-589 / NCTC 13251).